A 314-amino-acid polypeptide reads, in one-letter code: Oxidoreductase NAD-binding domain-containing protein 1 (314 aa).

Positions 1–18 (MALVAGSAAYQVLRGVTG) are cleaved as a signal peptide. The FAD-binding FR-type domain occupies 63 to 166 (EIISPAKVCE…VGGEFCFDPQ (104 aa)). 180–185 (GVGINP) is an NAD(+) binding site.

In Xenopus tropicalis (Western clawed frog), this protein is Oxidoreductase NAD-binding domain-containing protein 1 (oxnad1).